We begin with the raw amino-acid sequence, 546 residues long: Plastidic glucose transporter 4 (546 aa).

The next 12 membrane-spanning stretches (helical) occupy residues 105-125 (VLPFVGVACLGAILFGYHLGV), 148-168 (WIVSSLLAGATVGSFTGGALA), 182-202 (IPLAIGAFLCATAQSVQTMIV), 205-225 (LLAGIGIGISSAIVPLYISEI), 240-260 (LFICIGILAALIAGLPLAANP), 265-285 (TMFGVAVIPSVLLAIGMAFSP), 345-365 (VVSVGAALFLFQQLAGINAVV), 381-401 (VAASALVGASNVFGTAVASSL), 410-430 (LLLTSFGGMALSMLLLSLSFT), 441-461 (LAVVGTVLYVLSFSLGAGPVP), 477-497 (AVALSLGMHWISNFVIGLYFL), and 503-523 (FGISSVYLGFAGVCVLAVLYI).

This sequence belongs to the major facilitator superfamily. Sugar transporter (TC 2.A.1.1) family.

It localises to the plastid. Its subcellular location is the chloroplast inner membrane. Functionally, may be involved in the efflux of glucose towards the cytosol. This Arabidopsis thaliana (Mouse-ear cress) protein is Plastidic glucose transporter 4.